A 472-amino-acid chain; its full sequence is Type I restriction enzyme BthVORF4518P methylase subunit (472 aa).

Residues 151–156 (QYFTPR), 181–183 (TGG), Asp-214, and 243–244 (DS) each bind S-adenosyl-L-methionine.

Belongs to the N(4)/N(6)-methyltransferase family. In terms of assembly, the type I restriction/modification system is composed of three polypeptides R, M and S; the restriction enzyme has stoichiometry R(2)M(2)S(1) while the methyltransferase is M(2)S(1).

The catalysed reaction is a 2'-deoxyadenosine in DNA + S-adenosyl-L-methionine = an N(6)-methyl-2'-deoxyadenosine in DNA + S-adenosyl-L-homocysteine + H(+). Functionally, the subtype gamma methyltransferase (M) subunit of a type I restriction enzyme. The M and S subunits together form a methyltransferase (MTase) that methylates two adenine residues of an undetermined sequence. In the presence of the R subunit the complex can also act as an endonuclease, binding to the same target sequence but cutting the DNA some distance from this site. Whether the DNA is cut or modified depends on the methylation state of the target sequence. When the target site is unmodified, the DNA is cut. When the target site is hemimethylated, the complex acts as a maintenance MTase modifying the DNA so that both strands become methylated. After locating a non-methylated recognition site, the enzyme complex serves as a molecular motor that translocates DNA in an ATP-dependent manner until a collision occurs that triggers cleavage. The protein is Type I restriction enzyme BthVORF4518P methylase subunit of Bacteroides thetaiotaomicron (strain ATCC 29148 / DSM 2079 / JCM 5827 / CCUG 10774 / NCTC 10582 / VPI-5482 / E50).